An 845-amino-acid chain; its full sequence is uncharacterized protein (845 aa).

Over residues 224 to 241 (SNNIPTGIQDSSKYTVNG) the composition is skewed to polar residues. Disordered regions lie at residues 224–244 (SNNIPTGIQDSSKYTVNGPTE), 324–346 (QGTESISFASKNNSAPSADANNG), 383–434 (RTAN…EGSA), 456–485 (VKASNISTEKSKTIAKPKPAKELSPQATLN), 519–619 (NMTL…PKNS), 674–701 (VVSRTVTSPKSGAYASPSKASYNQDSSP), and 739–785 (RKST…ANKS). Positions 390–399 (PTKKSNRSEQ) are enriched in basic and acidic residues. Polar residues predominate over residues 400 to 422 (SKTVANTNVGSKNGTTPRSFAQK). Residues 534-546 (NSWRSKYLSEGKN) show a composition bias toward basic and acidic residues. Low complexity predominate over residues 563 to 576 (SSLASPTKSSASPL). Ser567 is modified (phosphoserine). Basic and acidic residues-rich tracts occupy residues 579–588 (APKETPERLC) and 600–614 (ANLKESELPKEKSDI). 3 stretches are compositionally biased toward polar residues: residues 674 to 683 (VVSRTVTSPK), 691 to 701 (SKASYNQDSSP), and 743 to 760 (ADSLSSPKRQSVPSTPKA).

It is found in the mitochondrion. This is an uncharacterized protein from Schizosaccharomyces pombe (strain 972 / ATCC 24843) (Fission yeast).